The chain runs to 420 residues: MWGENIATADLFANATDIHSIVQALTTLANASDVFFLVVMGVLVFMMQWGFAMLEGGQVRKKNVNNVMMKNMVDWLIGCVAWLFIGGILCSKGFDLSAFIDWWKQILGTNWPNNGLDLASWFFGLVFCATAATIVSGGVAERIKFSAYVLISLIITGLLYPLFVYLGPWGASIVPWHDYAGSLVVHGLGGFLALGAIAALGPRIGRFVDGRPVPILGHNIPMAVFGAFALAIGWYGFNVGSSLALGDISGLVCATTTMAMAGGGIGALIASRNDVLFTANGIVAGLVAICSGTDVVSPIGGLIIGLIAGLQVPIVYKLVEKAGLDDVCGVVPVHGTAGVIGAILTGILGLKIFGGAGGVSLIDQIIGAVFCIIYGTGLGYILAKIVGIALGGLRVSEEEEKMGLDMAEHKMPAYPEETVI.

The next 11 helical transmembrane spans lie at 34–54 (VFFL…FAML), 71–91 (NMVD…ILCS), 120–140 (SWFF…GGVA), 149–169 (VLIS…LGPW), 180–200 (AGSL…IAAL), 220–240 (IPMA…FNVG), 250–270 (GLVC…ALIA), 273–293 (NDVL…CSGT), 295–315 (VVSP…VPIV), 339–359 (VIGA…AGGV), and 365–385 (IIGA…LAKI).

It belongs to the ammonia transporter channel (TC 1.A.11.2) family. Homotrimer. Interacts and forms a complex with GlnK2.

The protein resides in the cell membrane. Its function is as follows. Involved in the uptake of ammonium/ammonia (NH(4)(+)/NH(3)). Transport is electrogenic. The chain is Ammonium transporter Amt2 from Methanocaldococcus jannaschii (strain ATCC 43067 / DSM 2661 / JAL-1 / JCM 10045 / NBRC 100440) (Methanococcus jannaschii).